The sequence spans 277 residues: Large ribosomal subunit protein uL2 (277 aa).

Disordered stretches follow at residues 37-60 and 223-265; these read KNSTAGRNNNGHITTRHKGGGHKH and VVMN…KRTD. Over residues 39–49 the composition is skewed to polar residues; it reads STAGRNNNGHI. Positions 50 to 60 are enriched in basic residues; that stretch reads TTRHKGGGHKH. Residues 229–244 show a composition bias toward basic and acidic residues; sequence DHPHGGGEGRTGEARE.

This sequence belongs to the universal ribosomal protein uL2 family. Part of the 50S ribosomal subunit. Forms a bridge to the 30S subunit in the 70S ribosome.

Functionally, one of the primary rRNA binding proteins. Required for association of the 30S and 50S subunits to form the 70S ribosome, for tRNA binding and peptide bond formation. It has been suggested to have peptidyltransferase activity; this is somewhat controversial. Makes several contacts with the 16S rRNA in the 70S ribosome. The polypeptide is Large ribosomal subunit protein uL2 (Neisseria meningitidis serogroup A / serotype 4A (strain DSM 15465 / Z2491)).